The primary structure comprises 184 residues: Adenine phosphoribosyltransferase (184 aa).

This sequence belongs to the purine/pyrimidine phosphoribosyltransferase family. As to quaternary structure, homodimer.

The protein resides in the cytoplasm. It catalyses the reaction AMP + diphosphate = 5-phospho-alpha-D-ribose 1-diphosphate + adenine. Its pathway is purine metabolism; AMP biosynthesis via salvage pathway; AMP from adenine: step 1/1. In terms of biological role, catalyzes a salvage reaction resulting in the formation of AMP, that is energically less costly than de novo synthesis. The chain is Adenine phosphoribosyltransferase from Parafrankia sp. (strain EAN1pec).